Consider the following 378-residue polypeptide: Succinyl-diaminopimelate desuccinylase (378 aa).

H67 provides a ligand contact to Zn(2+). D69 is a catalytic residue. D100 contributes to the Zn(2+) binding site. E134 serves as the catalytic Proton acceptor. E135, E163, and H349 together coordinate Zn(2+).

This sequence belongs to the peptidase M20A family. DapE subfamily. As to quaternary structure, homodimer. The cofactor is Zn(2+). It depends on Co(2+) as a cofactor.

The catalysed reaction is N-succinyl-(2S,6S)-2,6-diaminopimelate + H2O = (2S,6S)-2,6-diaminopimelate + succinate. Its pathway is amino-acid biosynthesis; L-lysine biosynthesis via DAP pathway; LL-2,6-diaminopimelate from (S)-tetrahydrodipicolinate (succinylase route): step 3/3. Its function is as follows. Catalyzes the hydrolysis of N-succinyl-L,L-diaminopimelic acid (SDAP), forming succinate and LL-2,6-diaminopimelate (DAP), an intermediate involved in the bacterial biosynthesis of lysine and meso-diaminopimelic acid, an essential component of bacterial cell walls. This is Succinyl-diaminopimelate desuccinylase from Pasteurella multocida (strain Pm70).